We begin with the raw amino-acid sequence, 203 residues long: Endo-type membrane-bound lytic murein transglycosylase A (203 aa).

Residues 1-15 (MKLRWFAFLMVLLAG) form the signal peptide. Cys-16 carries N-palmitoyl cysteine lipidation. A lipid anchor (S-diacylglycerol cysteine) is attached at Cys-16.

It belongs to the transglycosylase Slt family.

It localises to the cell outer membrane. It carries out the reaction Endolytic cleavage of the (1-&gt;4)-beta-glycosidic linkage between N-acetylmuramic acid (MurNAc) and N-acetylglucosamine (GlcNAc) residues in peptidoglycan with concomitant formation of a 1,6-anhydrobond in the MurNAc residue.. Functionally, murein-degrading enzyme. May play a role in recycling of muropeptides during cell elongation and/or cell division. Preferentially cleaves at a distance of more than two disaccharide units from the ends of the glycan chain. In Enterobacter sp. (strain 638), this protein is Endo-type membrane-bound lytic murein transglycosylase A.